We begin with the raw amino-acid sequence, 118 residues long: MARVAGVNIPDNKHTVIALTAIYGIGRTRAQKICEATGVKPDMKIRDLTEEEVEKLRAAVGQFPVEGDLRREVSMNIKRLMDLGCYRGLRHRRGLPLRGQRTRTNARTRKGPRRPIRK.

A disordered region spans residues 94 to 118; sequence GLPLRGQRTRTNARTRKGPRRPIRK.

It belongs to the universal ribosomal protein uS13 family. As to quaternary structure, part of the 30S ribosomal subunit. Forms a loose heterodimer with protein S19. Forms two bridges to the 50S subunit in the 70S ribosome.

Functionally, located at the top of the head of the 30S subunit, it contacts several helices of the 16S rRNA. In the 70S ribosome it contacts the 23S rRNA (bridge B1a) and protein L5 of the 50S subunit (bridge B1b), connecting the 2 subunits; these bridges are implicated in subunit movement. Contacts the tRNAs in the A and P-sites. The polypeptide is Small ribosomal subunit protein uS13 (Thioalkalivibrio sulfidiphilus (strain HL-EbGR7)).